Consider the following 146-residue polypeptide: Protein archease (146 aa).

Residues aspartate 16, aspartate 145, and isoleucine 146 each contribute to the Ca(2+) site.

Belongs to the archease family.

Activates the tRNA-splicing ligase complex by facilitating the enzymatic turnover of catalytic subunit RtcB. Acts by promoting the guanylylation of RtcB, a key intermediate step in tRNA ligation. Can also alter the NTP specificity of RtcB such that ATP, dGTP or ITP is used efficiently. The polypeptide is Protein archease (Methanosarcina acetivorans (strain ATCC 35395 / DSM 2834 / JCM 12185 / C2A)).